A 576-amino-acid polypeptide reads, in one-letter code: Probable proline--tRNA ligase, mitochondrial (576 aa).

Belongs to the class-II aminoacyl-tRNA synthetase family.

Its subcellular location is the mitochondrion. The catalysed reaction is tRNA(Pro) + L-proline + ATP = L-prolyl-tRNA(Pro) + AMP + diphosphate. The protein is Probable proline--tRNA ligase, mitochondrial (AIM10) of Saccharomyces cerevisiae (strain ATCC 204508 / S288c) (Baker's yeast).